The sequence spans 144 residues: Small polypeptide DEVIL 18 (144 aa).

The segment covering 30–58 (SFSTKTSSSSSKPVFTRSFSTKPTSYSSS) has biased composition (low complexity). Positions 30-89 (SFSTKTSSSSSKPVFTRSFSTKPTSYSSSEPIFRRSFSAKPTSSKSPFLSRSGSTKCPVD) are disordered. Residues 42–58 (PVFTRSFSTKPTSYSSS) form a helical membrane-spanning segment. A compositionally biased stretch (polar residues) spans 68–84 (AKPTSSKSPFLSRSGST). Residues 108-139 (SVTRKCRNMAKEHKSRFYIMKRCVLMLVCWHK) form a required for DVL/RTFL small polypeptide activity region.

It belongs to the DVL/RTFL small polypeptides family.

It is found in the cell membrane. Functionally, small polypeptide acting as a regulatory molecule which coordinates cellular responses required for differentiation, growth and development, probably by restricting polar cell proliferation in lateral organs and coordinating socket cell recruitment and differentiation at trichome sites. This Arabidopsis thaliana (Mouse-ear cress) protein is Small polypeptide DEVIL 18.